A 58-amino-acid chain; its full sequence is MSYYYGNYYGGLGYGLGGFGGFGGLGYGYGSSYGLGGYGGYGYFSPSFYGGYLSSGFY.

Residues 6–52 (GNYYGGLGYGLGGFGGFGGLGYGYGSSYGLGGYGGYGYFSPSFYGGY) form a 12 X 2 AA repeats of G-[YCGS] region.

The protein belongs to the KRTAP type 19 family. In terms of assembly, interacts with hair keratins.

In terms of biological role, in the hair cortex, hair keratin intermediate filaments are embedded in an interfilamentous matrix, consisting of hair keratin-associated proteins (KRTAP), which are essential for the formation of a rigid and resistant hair shaft through their extensive disulfide bond cross-linking with abundant cysteine residues of hair keratins. The matrix proteins include the high-sulfur and high-glycine-tyrosine keratins. This Mus musculus (Mouse) protein is Keratin-associated protein 19-9b (Krtap19-9b).